The following is a 2670-amino-acid chain: Inositol 1,4,5-trisphosphate-gated calcium channel ITPR3 (2670 aa).

Residues 1–2201 (MNEMSSFLHI…LIYWFSRRMT (2201 aa)) are Cytoplasmic-facing. 5 MIR domains span residues 113-173 (GDVV…LRSN), 174-224 (GDNV…INLF), 232-288 (EEVL…VEVV), 295-372 (GGAG…LDPT), and 378-434 (DSFV…IVSV). 1D-myo-inositol 1,4,5-trisphosphate is bound by residues Arg266, Thr268, Leu269, and Arg270. Residues 321–344 (PSYKGDVSDPKAAGPGAQSRTGRR) form a disordered region. Arg503, Lys507, Arg510, Tyr567, Arg568, and Lys569 together coordinate 1D-myo-inositol 1,4,5-trisphosphate. Residue Arg743 participates in Ca(2+) binding. Ser916 and Ser934 each carry phosphoserine. The Ca(2+) site is built by Glu1122 and Glu1125. The span at 1134 to 1153 (VKGEEGEAGASKDKKERPSD) shows a compositional bias: basic and acidic residues. Disordered stretches follow at residues 1134-1164 (VKGEEGEAGASKDKKERPSDEEGFLQPHGEK) and 1807-1849 (NMSD…GLHR). Ser1813, Ser1832, and Ser1834 each carry phosphoserine. Over residues 1831 to 1842 (SSFSMPSSSRYS) the composition is skewed to low complexity. Ca(2+) contacts are provided by Glu1881 and Glu1945. The ATP site is built by Ala1995, Glu2148, and Lys2151. Residues 2202 to 2222 (LWGSISFNLAVFINIIIAFFY) traverse the membrane as a helical segment. Topologically, residues 2223 to 2233 (PYVEGASTGVL) are extracellular. The helical transmembrane segment at 2234-2254 (GSPLISLLFWILICFSIAALF) threads the bilayer. The Cytoplasmic segment spans residues 2255–2263 (TKHYSVRPL). Residues 2264 to 2284 (IVALVLRSIYYLGIGPTLNIL) traverse the membrane as a helical segment. Over 2285 to 2324 (GALNLTNKIVFVVSFVGNRGTFIRGYKAMVMDMEFLYHVG) the chain is Extracellular. A helical membrane pass occupies residues 2325 to 2345 (YILTSVLGLFAHELFYSILLF). The Cytoplasmic portion of the chain corresponds to 2346–2367 (DLIYREETLFNVIKSVTRNGRS). Residues 2368 to 2388 (ILLTALLALILVYLFSIVGFL) form a helical membrane-spanning segment. The Extracellular portion of the chain corresponds to 2389 to 2495 (FLKDDFILEV…ESLFPARVVY (107 aa)). A disulfide bridge links Cys2454 with Cys2460. The chain crosses the membrane as a helical span at residues 2496–2516 (DLLFFFIVIIIVLNLIFGVII). Residues 2517–2670 (DTFADLRSEK…FVDVQNCMSR (154 aa)) lie on the Cytoplasmic side of the membrane. Residues Cys2537 and Phe2538 each coordinate ATP. Residue Cys2537 participates in Zn(2+) binding. Residues Cys2540 and His2557 each coordinate Zn(2+). The ATP site is built by Lys2559, His2562, Asn2563, and Met2564. A Zn(2+)-binding site is contributed by His2562. Residue Thr2580 participates in Ca(2+) binding. A phosphoserine mark is found at Ser2608 and Ser2669.

It belongs to the InsP3 receptor family. As to quaternary structure, homotetramer. Homodimer. Interacts with TRPC1 and TRPC3. Interacts with TRPC4. Interacts with TRPV4. Interacts with SIGMAR1. Interacts with AKT1 and PML. Interacts with IRAG2 (via coiled-coil domain). Interacts with CABP1. Interacts with TMBIM4/LFG4. Interacts with CEMIP. Interacts with TESPA1. Interacts with TMEM203. Interacts with BOK; regulates ITPR3 expression. Interacts with BCL2L10. Interacts with CHGA and CHGB. Phosphorylated by AKT1 on serine and/or threonine residues.

The protein localises to the endoplasmic reticulum membrane. It is found in the cytoplasmic vesicle. It localises to the secretory vesicle membrane. The catalysed reaction is Ca(2+)(in) = Ca(2+)(out). Its activity is regulated as follows. Inositol 1,4,5-trisphosphate-gated calcium channel is regulated by cytosolic calcium in a biphasic manner. At low concentrations, cytosolic calcium binds at a high-affinity juxtamembrane domain (JD) calcium binding site, allowing ITPR3 to activate by escaping a low-energy resting state through an ensemble of preactivated states. At high cytosolic calcium concentrations, ITPR3 preferentially enters an inhibited state stabilized by calcium binding at a second, low-affinity cytoplasmic domain (CD) calcium binding site. Inositol 1,4,5-trisphosphate-gated calcium channel that, upon 1D-myo-inositol 1,4,5-trisphosphate binding, transports calcium from the endoplasmic reticulum lumen to cytoplasm, thus releasing the intracellular calcium and therefore participates in cellular calcium ion homeostasis. 11D-myo-inositol 1,4,5-trisphosphate binds to the ligand-free channel without altering its global conformation, yielding the low-energy resting state, then progresses through resting-to preactivated transitions to the higher energy preactivated state, which increases affinity for calcium, promoting binding of the low basal cytosolic calcium at the juxtamembrane domain (JD) site, favoring the transition through the ensemble of high-energy intermediate states along the trajectory to the fully-open activated state. Upon opening, releases calcium in the cytosol where it can bind to the low-affinity cytoplasmic domain (CD) site and stabilizes the inhibited state to terminate calcium release. The protein is Inositol 1,4,5-trisphosphate-gated calcium channel ITPR3 of Rattus norvegicus (Rat).